A 79-amino-acid chain; its full sequence is MKKLAAVMLTSCLMVAVGASFADEMKKDDMKKDVMMKKDDMAKDEMKKDSMAKDGMKKDAMKKDAMMKKDGMTKDEMKK.

The first 22 residues, M1–A22, serve as a signal peptide directing secretion. The interval K37 to K79 is disordered.

Post-translationally, protein is oxidized (possibly on Met residues) when cells are exposed to chlorite or hypochlorite; initially the protein is highly oxidized, by 50 minutes all protein is in the reduced form.

The protein localises to the periplasm. In terms of biological role, serves as an oxidative stress sink, specifically for chlorite and hypochlorite. The sequence is that of Methionine-rich peptide X from Azospira oryzae (strain ATCC BAA-33 / DSM 13638 / PS) (Dechlorosoma suillum).